The primary structure comprises 506 residues: ATP synthase subunit alpha (506 aa).

171–178 is a binding site for ATP; the sequence is GDRKTGKT.

It belongs to the ATPase alpha/beta chains family. F-type ATPases have 2 components, CF(1) - the catalytic core - and CF(0) - the membrane proton channel. CF(1) has five subunits: alpha(3), beta(3), gamma(1), delta(1), epsilon(1). CF(0) has three main subunits: a(1), b(2) and c(9-12). The alpha and beta chains form an alternating ring which encloses part of the gamma chain. CF(1) is attached to CF(0) by a central stalk formed by the gamma and epsilon chains, while a peripheral stalk is formed by the delta and b chains.

It is found in the cell inner membrane. It catalyses the reaction ATP + H2O + 4 H(+)(in) = ADP + phosphate + 5 H(+)(out). In terms of biological role, produces ATP from ADP in the presence of a proton gradient across the membrane. The alpha chain is a regulatory subunit. The sequence is that of ATP synthase subunit alpha from Anaplasma phagocytophilum (strain HZ).